The following is a 134-amino-acid chain: RxLR effector protein 4 (134 aa).

A signal peptide spans 1–22 (MRSLFYIAVAVAVFARSSAVAA). The interval 43 to 65 (AMASSDSRKRFLRATDPEDGDLQ) is disordered. Basic and acidic residues predominate over residues 48–58 (DSRKRFLRATD). A RxLR-dEER motif is present at residues 52 to 71 (RFLRATDPEDGDLQADDEER).

The protein belongs to the RxLR effector family.

Its subcellular location is the secreted. Its function is as follows. Effector that enhances plant susceptibility to P.parasitica in Nicotiana benthamiana and Arabidopsis thaliana. Triggers non-specific cell death in a variety of plants, including tobacco, tomato, potato and A.thaliana. E4-induced cell death is dependent on HSP90, NPK and SGT1, suggesting that PpE4 is recognized by the plant immune system. This chain is RxLR effector protein 4, found in Phytophthora nicotianae (strain INRA-310) (Phytophthora parasitica).